The chain runs to 314 residues: MRALFYKDGKLFTDNNFLNPVSDDNPAYEVLQHVKIPTHLTDVVVYEQTWEEALTRLIFVGSDSKGRRQYFYGKMHIQNRNAKRDRIFVRVYNVMKRINCFINKNIKKSSTDSNYQLAVFMLMETMFFIRFGKMKYLKENETVGLLTLKNKHIEISPDEIVIKFVGKDKVSHEFVVHKSNRLYKPLLKLTDDSSPEEFLFNKLSERKVYECIKQFGIRIKDLRTYGVNYTFLYNFWTNVKSVSPLPSPKKLIALTIKQTAEVVGHTPSISKRAYMATTILEMVKDKNFLDVVSKTTFDEFLSIVVDHVKSSTDG.

In terms of domain architecture, Topo IB-type catalytic spans 77 to 314 (IQNRNAKRDR…VDHVKSSTDG (238 aa)). Tyrosine 274 functions as the O-(3'-phospho-DNA)-tyrosine intermediate in the catalytic mechanism.

This sequence belongs to the type IB topoisomerase family.

Its subcellular location is the virion. The catalysed reaction is ATP-independent breakage of single-stranded DNA, followed by passage and rejoining.. Releases the supercoiling and torsional tension of DNA introduced during the DNA replication and transcription by transiently cleaving and rejoining one strand of the DNA duplex. Introduces a single-strand break via transesterification at the specific target site 5'-[CT]CCTTp site in duplex DNA. The scissile phosphodiester is attacked by the catalytic tyrosine of the enzyme, resulting in the formation of a DNA-(3'-phosphotyrosyl)-enzyme intermediate and the expulsion of a 5'-OH DNA strand. The free DNA strand then undergoes passage around the unbroken strand thus removing DNA supercoils. Finally, in the religation step, the DNA 5'-OH attacks the covalent intermediate to expel the active-site tyrosine and restore the DNA phosphodiester backbone. This chain is DNA topoisomerase I (OPG111), found in Cynomys gunnisoni (Gunnison's prairie dog).